The sequence spans 211 residues: DELTA-stichotoxin-Hmg2a (211 aa).

Positions 1-19 (MNRLIVLFLIVTMICATIA) are cleaved as a signal peptide. Positions 20-34 (VPSREELEDQKEYKR) are excised as a propeptide. The segment at 37–46 (ALAGTIIEGA) is plays an important role in the hemolytic activity. Residues 45-64 (GASLGFQILDKVLGELGKVS) are N-terminal region. Phosphocholine is bound by residues Ser88, Val121, Ser139, Pro141, Tyr167, Tyr171, and Tyr172. Positions 139 to 154 (SVPFDYNFYSNWWDVK) are trp-rich region, which is important for the binding to lipid membrane. The short motif at 177-179 (RGD) is the Cell attachment site, crucial for protein stability element.

The protein belongs to the actinoporin family. Sea anemone subfamily. Octamer or nonamer in membranes. Monomer in the soluble state.

Its subcellular location is the secreted. The protein localises to the nematocyst. It localises to the target cell membrane. Its function is as follows. Pore-forming protein that forms cations-selective hydrophilic pores of around 1 nm and causes cardiac stimulation and cytolysis. Pore formation is a multi-step process that involves specific recognition of membrane sphingomyelin (but neither cholesterol nor phosphatidylcholine) using aromatic rich region and adjacent phosphocholine (POC) binding site, firm binding to the membrane (mainly driven by hydrophobic interactions) accompanied by the transfer of the N-terminal region to the lipid-water interface and finally pore formation after oligomerization of monomers. In Heteractis magnifica (Magnificent sea anemone), this protein is DELTA-stichotoxin-Hmg2a.